The following is a 362-amino-acid chain: Chorismate synthase (362 aa).

Residue R46 coordinates NADP(+). Residues 122 to 124, 238 to 239, G278, 293 to 297, and R319 contribute to the FMN site; these read RSS, NA, and KPTPS.

Belongs to the chorismate synthase family. As to quaternary structure, homotetramer. It depends on FMNH2 as a cofactor.

The enzyme catalyses 5-O-(1-carboxyvinyl)-3-phosphoshikimate = chorismate + phosphate. It functions in the pathway metabolic intermediate biosynthesis; chorismate biosynthesis; chorismate from D-erythrose 4-phosphate and phosphoenolpyruvate: step 7/7. Functionally, catalyzes the anti-1,4-elimination of the C-3 phosphate and the C-6 proR hydrogen from 5-enolpyruvylshikimate-3-phosphate (EPSP) to yield chorismate, which is the branch point compound that serves as the starting substrate for the three terminal pathways of aromatic amino acid biosynthesis. This reaction introduces a second double bond into the aromatic ring system. This is Chorismate synthase from Campylobacter jejuni subsp. jejuni serotype O:23/36 (strain 81-176).